The following is a 410-amino-acid chain: Centromere protein U (410 aa).

The interval 1–72 (MAARRSLRYS…YETFDPPLHS (72 aa)) is disordered. A Nuclear localization signal motif is present at residues 4-21 (RRSLRYSGDPGAKRSRNT). A compositionally biased stretch (basic residues) spans 28 to 38 (RKQKAGQKPKR). T73 is subject to Phosphothreonine; by PLK1. The segment at 87–228 (SSTSPATHRG…THSDASESMH (142 aa)) is disordered. Positions 101–115 (NLNPSENEASGNDSI) are enriched in polar residues. Residues S105, S110, S114, S130, S133, and S135 each carry the phosphoserine modification. Residues 138–149 (DNVRRSVSIERP) are compositionally biased toward basic and acidic residues. A compositionally biased stretch (low complexity) spans 158-169 (PAAASSSSSPSE). A Glycyl lysine isopeptide (Lys-Gly) (interchain with G-Cter in SUMO2) cross-link involves residue K179. S186 carries the phosphoserine modification. A Phosphothreonine modification is found at T191. Positions 200-218 (TQKKVRPSPGRRKRPRRGS) are enriched in basic residues. A Phosphoserine modification is found at S224. A coiled-coil region spans residues 289–352 (QMLKALKRKN…LKNSKHFLSN (64 aa)). The short motif at 295–312 (KRKNTKIISNMEKKRQRL) is the Nuclear localization signal element.

It belongs to the CENP-U/AME1 family. Component of the CENPA-NAC complex, at least composed of CENPA, CENPC, CENPH, CENPM, CENPN, CENPT and CENPU. The CENPA-NAC complex interacts with the CENPA-CAD complex, composed of CENPI, CENPK, CENPL, CENPO, CENPP, CENPQ, CENPR and CENPS. Interacts with MLF1. Phosphorylated by PLK1 at Thr-73, creating a self-tethering site that specifically interacts with the polo-box domain of PLK1. Expressed at high levels in glioblastoma cell lines. Up-regulated in GBM (glioblastoma multiforme) tumors. Significantly increased in both the tumor core as well as the contralateral striatum and cortex in gliomas.

Its subcellular location is the cytoplasm. The protein localises to the nucleus. It localises to the chromosome. It is found in the centromere. The protein resides in the kinetochore. Its function is as follows. Component of the CENPA-NAC (nucleosome-associated) complex, a complex that plays a central role in assembly of kinetochore proteins, mitotic progression and chromosome segregation. The CENPA-NAC complex recruits the CENPA-CAD (nucleosome distal) complex and may be involved in incorporation of newly synthesized CENPA into centromeres. Plays an important role in the correct PLK1 localization to the mitotic kinetochores. A scaffold protein responsible for the initial recruitment and maintenance of the kinetochore PLK1 population until its degradation. Involved in transcriptional repression. The polypeptide is Centromere protein U (Cenpu) (Rattus norvegicus (Rat)).